The primary structure comprises 127 residues: Vacuolar ATPase assembly integral membrane protein VMA21 (127 aa).

Residues 1-28 (MATRRNPTKESITTSPPPDQQPRQPGEL) are disordered. At 1 to 45 (MATRRNPTKESITTSPPPDQQPRQPGELEHREAIQLRDLPGYPQQ) the chain is on the cytoplasmic side. The chain crosses the membrane as a helical span at residues 46–66 (VLWKLIIYSIAVLVLPLSAYF). Over 67 to 79 (YSVNYVFDGNTTY) the chain is Lumenal. A helical transmembrane segment spans residues 80–100 (AGATAAITANLILFSYIVVAM). Topologically, residues 101-127 (REDKGDQEQLREQQQLRGNKEETKKMK) are cytoplasmic. The interval 107 to 127 (QEQLREQQQLRGNKEETKKMK) is disordered. Residues 118–127 (GNKEETKKMK) show a composition bias toward basic and acidic residues. The short motif at 124–127 (KKMK) is the Prevents secretion from ER element.

This sequence belongs to the VMA21 family.

Its subcellular location is the endoplasmic reticulum membrane. The protein localises to the endoplasmic reticulum-Golgi intermediate compartment membrane. The protein resides in the cytoplasmic vesicle. It localises to the COPII-coated vesicle membrane. Its function is as follows. Required for the assembly of the V0 complex of the vacuolar ATPase (V-ATPase) in the endoplasmic reticulum. This Coccidioides immitis (strain RS) (Valley fever fungus) protein is Vacuolar ATPase assembly integral membrane protein VMA21.